Consider the following 524-residue polypeptide: Probable lipid II flippase MurJ (524 aa).

A run of 13 helical transmembrane segments spans residues 44 to 64 (IFGA…PNLL), 103 to 123 (LLTL…PWVI), 146 to 166 (ITFP…ILNT), 172 to 192 (IPAF…LFAA), 195 to 215 (FNPP…LQLV), 250 to 270 (ILGV…ASFL), 284 to 304 (LMEF…LPSL), 322 to 342 (WGLR…GILA), 367 to 387 (LIAY…APGF), 396 to 416 (PVKI…AFIG), 420 to 440 (HAGL…LLYW), 456 to 476 (WFLM…FGVL), and 494 to 514 (LMAV…VLGF).

Belongs to the MurJ/MviN family.

The protein resides in the cell inner membrane. The protein operates within cell wall biogenesis; peptidoglycan biosynthesis. Its function is as follows. Involved in peptidoglycan biosynthesis. Transports lipid-linked peptidoglycan precursors from the inner to the outer leaflet of the cytoplasmic membrane. In Salmonella typhimurium (strain LT2 / SGSC1412 / ATCC 700720), this protein is Probable lipid II flippase MurJ.